We begin with the raw amino-acid sequence, 108 residues long: Small ribosomal subunit protein bS6 (108 aa).

It belongs to the bacterial ribosomal protein bS6 family.

Its function is as follows. Binds together with bS18 to 16S ribosomal RNA. The protein is Small ribosomal subunit protein bS6 of Dichelobacter nodosus (strain VCS1703A).